The primary structure comprises 238 residues: Uridylate kinase (238 aa).

Lys12–Gly15 contacts ATP. Position 54 (Gly54) interacts with UMP. Residues Gly55 and Arg59 each coordinate ATP. UMP is bound by residues Asp74 and Thr135 to Thr142. 3 residues coordinate ATP: Thr162, Tyr168, and Asp171.

It belongs to the UMP kinase family. Homohexamer.

The protein localises to the cytoplasm. The enzyme catalyses UMP + ATP = UDP + ADP. It functions in the pathway pyrimidine metabolism; CTP biosynthesis via de novo pathway; UDP from UMP (UMPK route): step 1/1. With respect to regulation, inhibited by UTP. In terms of biological role, catalyzes the reversible phosphorylation of UMP to UDP. The sequence is that of Uridylate kinase from Bordetella bronchiseptica (strain ATCC BAA-588 / NCTC 13252 / RB50) (Alcaligenes bronchisepticus).